A 449-amino-acid polypeptide reads, in one-letter code: Glucose-6-phosphate isomerase (449 aa).

E291 serves as the catalytic Proton donor. Active-site residues include H312 and K426.

This sequence belongs to the GPI family.

It is found in the cytoplasm. It catalyses the reaction alpha-D-glucose 6-phosphate = beta-D-fructose 6-phosphate. Its pathway is carbohydrate biosynthesis; gluconeogenesis. The protein operates within carbohydrate degradation; glycolysis; D-glyceraldehyde 3-phosphate and glycerone phosphate from D-glucose: step 2/4. Catalyzes the reversible isomerization of glucose-6-phosphate to fructose-6-phosphate. The chain is Glucose-6-phosphate isomerase from Streptococcus pneumoniae serotype 4 (strain ATCC BAA-334 / TIGR4).